The following is a 151-amino-acid chain: Large ribosomal subunit protein uL15 (151 aa).

The tract at residues 1–58 is disordered; the sequence is MTSISLDSLKPNKGARKRKTRKGRGIAAGQGASCGFGMRGQKSRSGRPTRPGFEGGQM. The segment covering 13–24 has biased composition (basic residues); sequence KGARKRKTRKGR. Residues 26 to 38 show a composition bias toward gly residues; sequence IAAGQGASCGFGM.

Belongs to the universal ribosomal protein uL15 family. As to quaternary structure, part of the 50S ribosomal subunit.

Binds to the 23S rRNA. The sequence is that of Large ribosomal subunit protein uL15 from Prochlorococcus marinus (strain SARG / CCMP1375 / SS120).